Reading from the N-terminus, the 338-residue chain is Anthranilate phosphoribosyltransferase (338 aa).

5-phospho-alpha-D-ribose 1-diphosphate is bound by residues glycine 81, 84 to 85 (GD), threonine 89, 91 to 94 (NIST), 109 to 117 (KHGNRNLSS), and alanine 121. Glycine 81 is a binding site for anthranilate. Serine 93 lines the Mg(2+) pocket. Residue asparagine 112 coordinates anthranilate. Arginine 167 lines the anthranilate pocket. Aspartate 226 and glutamate 227 together coordinate Mg(2+).

This sequence belongs to the anthranilate phosphoribosyltransferase family. As to quaternary structure, homodimer. It depends on Mg(2+) as a cofactor.

The enzyme catalyses N-(5-phospho-beta-D-ribosyl)anthranilate + diphosphate = 5-phospho-alpha-D-ribose 1-diphosphate + anthranilate. The protein operates within amino-acid biosynthesis; L-tryptophan biosynthesis; L-tryptophan from chorismate: step 2/5. Its function is as follows. Catalyzes the transfer of the phosphoribosyl group of 5-phosphorylribose-1-pyrophosphate (PRPP) to anthranilate to yield N-(5'-phosphoribosyl)-anthranilate (PRA). The protein is Anthranilate phosphoribosyltransferase of Cereibacter sphaeroides (strain ATCC 17029 / ATH 2.4.9) (Rhodobacter sphaeroides).